The following is a 233-amino-acid chain: Rab-like protein 3 (233 aa).

The segment at 1-233 is small GTPase-like; sequence MASLDRVKVL…RFNFKSLHSD (233 aa). Residues 16–21, 148–150, and 179–180 each bind GTP; these read GVGKSS, KFD, and DC.

Belongs to the small GTPase superfamily. Rab family. Homodimer.

Functionally, required for KRAS signaling regulation and modulation of cell proliferation. Regulator of KRAS prenylation, and probably prenylation of other small GTPases. Required for lymphocyte development and function. Not required for myeloid cell development. This is Rab-like protein 3 (rabl3) from Danio rerio (Zebrafish).